The primary structure comprises 276 residues: Halorhodopsin (276 aa).

Positions 1–21 (MTAASTTATTMLQATQSDVLQ) are excised as a propeptide. Residues 22 to 25 (EIQS) lie on the Extracellular side of the membrane. The helical transmembrane segment at 26–51 (NFLLNSSIWVNIALAGVVILLFVAMG) threads the bilayer. Topologically, residues 52-57 (RDIESP) are cytoplasmic. A helical membrane pass occupies residues 58–81 (RAKLIWVATMLVPLVSISSYAGLA). The Extracellular portion of the chain corresponds to 82–105 (SGLTVGFLQMPPGHALAGQEVLSP). A helical membrane pass occupies residues 106–127 (WGRYLTWTFSTPMILLALGLLA). Topologically, residues 128–130 (DTD) are cytoplasmic. Residues 131–154 (IASLFTAITMDIGMCVTGLAAALI) traverse the membrane as a helical segment. At 155-157 (TSS) the chain is on the extracellular side. Residues 158 to 180 (HLLRWVFYGISCAFFVAVLYVLL) form a helical membrane-spanning segment. Residues 181–192 (VQWPADAEAAGT) lie on the Cytoplasmic side of the membrane. The chain crosses the membrane as a helical span at residues 193 to 216 (SEIFGTLKILTVVLWLGYPILWAL). The Extracellular portion of the chain corresponds to 217–225 (GSEGVALLS). Residues 226–254 (VGVTSWGYSGLDILAKYVFAFLLLRWVAA) traverse the membrane as a helical segment. Lys-241 is modified (N6-(retinylidene)lysine). Over 255 to 276 (NEGAVSGSGMSIGSGGAAPADD) the chain is Cytoplasmic.

It belongs to the archaeal/bacterial/fungal opsin family.

Its subcellular location is the cell membrane. Functionally, light-driven chloride pump. The chain is Halorhodopsin (hop) from Halobacterium halobium (strain port).